Consider the following 110-residue polypeptide: Probable ribonuclease HepT (110 aa).

Catalysis depends on residues Arg-75 and His-80. Positions 75–82 match the RX(4)HXY motif motif; sequence RDKLIHAY. Tyr-82 carries the O-di-AMP-tyrosine modification.

It belongs to the HepT RNase toxin family. Post-translationally, modified by cognate antitoxin MntA; probably at least 2 successive AMPylation events occur on Tyr-82.

Functionally, toxic component of a type VII toxin-antitoxin (TA) system. Overexpression in E.coli inhibits cell growth. Neutralized by cognate antitoxin MntA. Neutralization is probably due to AMPylation by MntA. Probably an RNAase. This Thermococcus cleftensis (strain DSM 27260 / KACC 17922 / CL1) protein is Probable ribonuclease HepT.